Consider the following 433-residue polypeptide: Glutamate-1-semialdehyde 2,1-aminomutase (433 aa).

N6-(pyridoxal phosphate)lysine is present on lysine 271.

This sequence belongs to the class-III pyridoxal-phosphate-dependent aminotransferase family. HemL subfamily. In terms of assembly, homodimer. Requires pyridoxal 5'-phosphate as cofactor.

The protein resides in the cytoplasm. It catalyses the reaction (S)-4-amino-5-oxopentanoate = 5-aminolevulinate. Its pathway is porphyrin-containing compound metabolism; protoporphyrin-IX biosynthesis; 5-aminolevulinate from L-glutamyl-tRNA(Glu): step 2/2. It functions in the pathway porphyrin-containing compound metabolism; chlorophyll biosynthesis. In Prochlorococcus marinus (strain SARG / CCMP1375 / SS120), this protein is Glutamate-1-semialdehyde 2,1-aminomutase.